The primary structure comprises 710 residues: Proline-rich receptor-like protein kinase PERK13 (710 aa).

The tract at residues 1–229 is disordered; it reads MSDSPTSSPP…SVPPPANSGG (229 aa). The Extracellular segment spans residues 1 to 235; it reads MSDSPTSSPP…NSGGGYQGKT (235 aa). Pro residues-rich tracts occupy residues 7–21, 29–130, 137–151, and 168–188; these read SSPPAPSADSAPPPD, APPP…PPPP, PPAPPPPEQLPPPAS, and ATSPPAPSAPATSPPAPPNAP. The N-linked (GlcNAc...) asparagine glycan is linked to N191. The span at 209 to 220 shows a compositional bias: low complexity; sequence SPSRGVPSSGNS. Residues 236-256 form a helical membrane-spanning segment; that stretch reads MAGFAIAGFAVIALMAVVFLV. At 257–710 the chain is on the cytoplasmic side; that stretch reads RRKKKRNIDA…ENRNFNNRRY (454 aa). The segment at 289 to 334 is disordered; sequence QNPTKGYSGPGGYNSQQQSNSGNSFGSQRGGGGYTRSGSAPDSAVM. Residues 301-315 are compositionally biased toward low complexity; it reads YNSQQQSNSGNSFGS. T342 bears the Phosphothreonine mark. One can recognise a Protein kinase domain in the interval 353-619; sequence FSKHNILGEG…RHSGPKRPRM (267 aa). Residues 359–367 and K381 each bind ATP; that span reads LGEGGFGCV. Y426 bears the Phosphotyrosine mark. The active-site Proton acceptor is D477. The residue at position 510 (S510) is a Phosphoserine. Residues T511 and T516 each carry the phosphothreonine modification. Y524 carries the post-translational modification Phosphotyrosine. A disordered region spans residues 676–710; sequence SGDYSVQDSRKGSNGASSEFTRNETENRNFNNRRY.

It belongs to the protein kinase superfamily. Ser/Thr protein kinase family. Interacts with KIPK1 and KIPK2 (via its cytosolic domain). Mostly expressed in roots, especially in root hairs.

The protein localises to the cell membrane. The catalysed reaction is L-seryl-[protein] + ATP = O-phospho-L-seryl-[protein] + ADP + H(+). It catalyses the reaction L-threonyl-[protein] + ATP = O-phospho-L-threonyl-[protein] + ADP + H(+). Functionally, negatively regulates root hair elongation. This chain is Proline-rich receptor-like protein kinase PERK13 (PERK13), found in Arabidopsis thaliana (Mouse-ear cress).